The following is a 132-amino-acid chain: Small ribosomal subunit protein uS8 (132 aa).

It belongs to the universal ribosomal protein uS8 family. In terms of assembly, part of the 30S ribosomal subunit. Contacts proteins S5 and S12.

Its function is as follows. One of the primary rRNA binding proteins, it binds directly to 16S rRNA central domain where it helps coordinate assembly of the platform of the 30S subunit. The polypeptide is Small ribosomal subunit protein uS8 (Lactobacillus acidophilus (strain ATCC 700396 / NCK56 / N2 / NCFM)).